Reading from the N-terminus, the 273-residue chain is Pantothenate synthetase (273 aa).

Residue 27 to 34 (MGALHDGH) participates in ATP binding. The Proton donor role is filled by H34. Q58 contributes to the (R)-pantoate binding site. Q58 provides a ligand contact to beta-alanine. Residue 144–147 (GKKD) participates in ATP binding. Residue Q150 participates in (R)-pantoate binding. Residues V173 and 181-184 (LSSR) each bind ATP.

This sequence belongs to the pantothenate synthetase family. Homodimer.

Its subcellular location is the cytoplasm. The catalysed reaction is (R)-pantoate + beta-alanine + ATP = (R)-pantothenate + AMP + diphosphate + H(+). Its pathway is cofactor biosynthesis; (R)-pantothenate biosynthesis; (R)-pantothenate from (R)-pantoate and beta-alanine: step 1/1. In terms of biological role, catalyzes the condensation of pantoate with beta-alanine in an ATP-dependent reaction via a pantoyl-adenylate intermediate. The chain is Pantothenate synthetase from Campylobacter concisus (strain 13826).